A 527-amino-acid polypeptide reads, in one-letter code: Sensory neuron membrane protein 1 (527 aa).

The Cytoplasmic portion of the chain corresponds to 1 to 10; the sequence is MQLQKPLKIG. The helical transmembrane segment at 11-31 threads the bilayer; sequence LGMMGAGLFGIIFGWVLFPVI. Residues 32–456 are Extracellular-facing; that stretch reads LKSQLKKEMA…LKNQLFIPKR (425 aa). Asn-67 and Asn-229 each carry an N-linked (GlcNAc...) asparagine glycan. 3 disulfide bridges follow: Cys-268–Cys-333, Cys-297–Cys-352, and Cys-335–Cys-341. The N-linked (GlcNAc...) asparagine glycan is linked to Asn-440. Residues 457–477 traverse the membrane as a helical segment; sequence IVSVVKWLLAGVGFVGLVGSL. At 478–527 the chain is on the cytoplasmic side; it reads VYQFKGKMINFALSPSSAQVTKVNPEINQQNQPKDISIIGESQNPPKVDM.

The protein belongs to the CD36 family. Detected in both male and female antennal tissues. Expression is two to three fold higher in male compared to female antenna.

It is found in the cell membrane. Plays an olfactory role that is not restricted to pheromone sensitivity. This is Sensory neuron membrane protein 1 from Ostrinia furnacalis (Asian corn borer).